We begin with the raw amino-acid sequence, 91 residues long: Mercuric transport protein periplasmic component (91 aa).

A signal peptide spans methionine 1–alanine 19. The region spanning glutamine 22 to serine 88 is the HMA domain. 2 residues coordinate Hg(2+): cysteine 33 and cysteine 36.

It belongs to the MerP family. Monomer.

It is found in the periplasm. In terms of biological role, involved in mercury resistance. Acts as a mercury scavenger that specifically binds to a mercuric ion in the periplasm and probably passes it to the cytoplasmic mercuric reductase MerA via the mercuric transport protein MerT. The sequence is that of Mercuric transport protein periplasmic component from Acinetobacter calcoaceticus.